Here is a 207-residue protein sequence, read N- to C-terminus: MERKERLRAGIAAMGLDISETAQDRLLAYVDLLKKWNKTYNLTALRDEEKMIVHHLLDSLTLLPHIEGVQTMLDVGSGGGQPGIPAAVCRPDVQITLLDANTKKTAFLQQAVIELGLDNVRVVSGRVEAVSDVRADVVTSRAFAELADFVSWTAHLLKDGGYWAAMKGVYPQGEIGRLPQDVCVEKVQRLDVPGLDAERHIVILSKR.

S-adenosyl-L-methionine contacts are provided by residues G76, Q81, 127-128 (VE), and R141.

The protein belongs to the methyltransferase superfamily. RNA methyltransferase RsmG family.

It is found in the cytoplasm. It catalyses the reaction guanosine(527) in 16S rRNA + S-adenosyl-L-methionine = N(7)-methylguanosine(527) in 16S rRNA + S-adenosyl-L-homocysteine. Functionally, specifically methylates the N7 position of guanine in position 527 of 16S rRNA. This Neisseria meningitidis serogroup A / serotype 4A (strain DSM 15465 / Z2491) protein is Ribosomal RNA small subunit methyltransferase G.